A 287-amino-acid chain; its full sequence is Formamidopyrimidine-DNA glycosylase (287 aa).

Pro2 acts as the Schiff-base intermediate with DNA in catalysis. The active-site Proton donor is the Glu3. The Proton donor; for beta-elimination activity role is filled by Lys61. Residues His95, Arg115, and Arg157 each contribute to the DNA site. The FPG-type zinc-finger motif lies at Asn243–Pro277. Arg267 acts as the Proton donor; for delta-elimination activity in catalysis.

This sequence belongs to the FPG family. As to quaternary structure, monomer. Zn(2+) serves as cofactor.

It catalyses the reaction Hydrolysis of DNA containing ring-opened 7-methylguanine residues, releasing 2,6-diamino-4-hydroxy-5-(N-methyl)formamidopyrimidine.. It carries out the reaction 2'-deoxyribonucleotide-(2'-deoxyribose 5'-phosphate)-2'-deoxyribonucleotide-DNA = a 3'-end 2'-deoxyribonucleotide-(2,3-dehydro-2,3-deoxyribose 5'-phosphate)-DNA + a 5'-end 5'-phospho-2'-deoxyribonucleoside-DNA + H(+). Its function is as follows. Involved in base excision repair of DNA damaged by oxidation or by mutagenic agents. Acts as a DNA glycosylase that recognizes and removes damaged bases. Has a preference for oxidized purines, such as 7,8-dihydro-8-oxoguanine (8-oxoG). Has AP (apurinic/apyrimidinic) lyase activity and introduces nicks in the DNA strand. Cleaves the DNA backbone by beta-delta elimination to generate a single-strand break at the site of the removed base with both 3'- and 5'-phosphates. This chain is Formamidopyrimidine-DNA glycosylase, found in Salinispora arenicola (strain CNS-205).